The following is a 161-amino-acid chain: Allophycocyanin beta chain (161 aa).

Asn71 carries the post-translational modification N4-methylasparagine. A (2R,3E)-phycocyanobilin-binding site is contributed by Cys81.

Belongs to the phycobiliprotein family. Heterodimer of an alpha and a beta chain. In terms of processing, contains one covalently linked phycocyanobilin chromophore.

Its subcellular location is the cellular thylakoid membrane. Functionally, light-harvesting photosynthetic bile pigment-protein from the phycobiliprotein complex. Allophycocyanin has a maximum absorption at approximately 650 nanometers. The chain is Allophycocyanin beta chain (apcB) from Synechococcus sp. (strain ATCC 27144 / PCC 6301 / SAUG 1402/1) (Anacystis nidulans).